The primary structure comprises 424 residues: UPF0597 protein Sbal223_1296 (424 aa).

Belongs to the UPF0597 family.

The protein is UPF0597 protein Sbal223_1296 of Shewanella baltica (strain OS223).